Here is a 432-residue protein sequence, read N- to C-terminus: Cyclic GMP-AMP synthase (432 aa).

110-115 (QGSFQY) is a GTP binding site. Positions 129 and 131 each coordinate Mg(2+). Residue Arg180 coordinates ATP. Asp191 contributes to the Mg(2+) binding site. Ser255 contributes to the ATP binding site. Residues Lys283, Ser297, and Asp344 each contribute to the GTP site. The interval 413–432 (LNAPSKEPSSKPINKTMVSG) is disordered. Residues 423-432 (KPINKTMVSG) are compositionally biased toward polar residues.

This sequence belongs to the CD-NTase family. A01 subfamily. Mg(2+) serves as cofactor.

It catalyses the reaction GTP + ATP = 3',3'-cGAMP + 2 diphosphate. Its function is as follows. Cyclic nucleotide synthase (second messenger synthase) of a CBASS antivirus system. CBASS (cyclic oligonucleotide-based antiphage signaling system) provides immunity against bacteriophage. The CD-NTase protein synthesizes cyclic nucleotides in response to infection; these serve as specific second messenger signals. The signals activate a diverse range of effectors, leading to bacterial cell death and thus abortive phage infection. A type II-C(GA) CBASS system. Functionally, catalyzes the synthesis of 3'3'-cyclic GMP-AMP (3'3'-cGAMP) from GTP and ATP, a second messenger in cell signal transduction. Is also able to produce c-di-AMP and c-di-GMP from ATP and GTP, respectively; however, 3'3'-cGAMP is the dominant molecule produced by DncV in vivo, contrary to the 2'3'-cGAMP produced by eukaryotes. By producing cGAMP, down-regulates csgD expression and expression of flagellum regulon genes, which leads to the down-regulation of rdar biofilm formation and flagellum-mediated swimming and swarming motility in a temperature-dependent manner. Controls the activity of cGAMP-activated phospholipase CapV, a patatin-like lipase that is a direct 3',3'-cGAMP receptor encoded in the dncV operon. The chain is Cyclic GMP-AMP synthase from Escherichia coli.